The primary structure comprises 336 residues: Quinolinate synthase (336 aa).

H25 and S42 together coordinate iminosuccinate. C86 contacts [4Fe-4S] cluster. Iminosuccinate contacts are provided by residues 117–119 (YIN) and S138. C198 is a [4Fe-4S] cluster binding site. Iminosuccinate-binding positions include 224 to 226 (HPE) and T241. C288 contacts [4Fe-4S] cluster.

This sequence belongs to the quinolinate synthase family. Type 3 subfamily. [4Fe-4S] cluster serves as cofactor.

The protein localises to the cytoplasm. The catalysed reaction is iminosuccinate + dihydroxyacetone phosphate = quinolinate + phosphate + 2 H2O + H(+). It participates in cofactor biosynthesis; NAD(+) biosynthesis; quinolinate from iminoaspartate: step 1/1. Its function is as follows. Catalyzes the condensation of iminoaspartate with dihydroxyacetone phosphate to form quinolinate. In Helicobacter pylori (strain HPAG1), this protein is Quinolinate synthase.